Consider the following 311-residue polypeptide: Lipoyl synthase (311 aa).

Residues Cys-47, Cys-52, Cys-58, Cys-73, Cys-77, Cys-80, and Ser-286 each coordinate [4Fe-4S] cluster. One can recognise a Radical SAM core domain in the interval 59–276 (WSRHTATYLA…RSVGESLGLF (218 aa)).

The protein belongs to the radical SAM superfamily. Lipoyl synthase family. Requires [4Fe-4S] cluster as cofactor.

The protein resides in the cytoplasm. The enzyme catalyses [[Fe-S] cluster scaffold protein carrying a second [4Fe-4S](2+) cluster] + N(6)-octanoyl-L-lysyl-[protein] + 2 oxidized [2Fe-2S]-[ferredoxin] + 2 S-adenosyl-L-methionine + 4 H(+) = [[Fe-S] cluster scaffold protein] + N(6)-[(R)-dihydrolipoyl]-L-lysyl-[protein] + 4 Fe(3+) + 2 hydrogen sulfide + 2 5'-deoxyadenosine + 2 L-methionine + 2 reduced [2Fe-2S]-[ferredoxin]. The protein operates within protein modification; protein lipoylation via endogenous pathway; protein N(6)-(lipoyl)lysine from octanoyl-[acyl-carrier-protein]: step 2/2. Catalyzes the radical-mediated insertion of two sulfur atoms into the C-6 and C-8 positions of the octanoyl moiety bound to the lipoyl domains of lipoate-dependent enzymes, thereby converting the octanoylated domains into lipoylated derivatives. This Chlamydia trachomatis serovar L2 (strain ATCC VR-902B / DSM 19102 / 434/Bu) protein is Lipoyl synthase.